A 500-amino-acid chain; its full sequence is POU domain, class 3, transcription factor 3 (500 aa).

Residues 32 to 52 are compositionally biased toward gly residues; it reads GGGGGGGGGGGGAGGGGGGMQ. Disordered regions lie at residues 32–63, 122–190, 231–319, and 461–500; these read GGGGGGGGGGGGAGGGGGGMQPGSAAVTSGAY, WSGS…WGAA, NGML…TPTS, and EKRMTPPGIQQQTPDDVYSQVGTVSADTPPPHHGLQTSVQ. Composition is skewed to pro residues over residues 134–146 and 171–181; these read QQPPQPPPPPPQG and HLGPPPPPPHQ. Gly residues predominate over residues 241–251; that stretch reads GGGGGGAGGGA. Over residues 270-287 the composition is skewed to basic residues; sequence HHHHHHHHAHPHPPHPHH. The span at 293-303 shows a compositional bias: gly residues; that stretch reads HHGGGGGGAGP. A POU-specific domain is found at 314–388; that stretch reads EDTPTSDDLE…LLNKWLEEAD (75 aa). Positions 406-465 form a DNA-binding region, homeobox; sequence KRKKRTSIEVSVKGALESHFLKCPKPSAQEITNLADSLQLEKEVVRVWFCNRRQKEKRMT. The segment covering 468 to 486 has biased composition (polar residues); the sequence is GIQQQTPDDVYSQVGTVSA.

The protein belongs to the POU transcription factor family. Class-3 subfamily. As to quaternary structure, homodimer. Brain.

It is found in the nucleus. Functionally, transcription factor that acts synergistically with SOX11 and SOX4. Plays a role in neuronal development. Is implicated in an enhancer activity at the embryonic met-mesencephalic junction; the enhancer element contains the octamer motif (5'-ATTTGCAT-3'). The chain is POU domain, class 3, transcription factor 3 from Homo sapiens (Human).